Reading from the N-terminus, the 291-residue chain is MTKINPYKGILVELKDIVFTSSSDQIKLPINTFKSILCCGATAQYQCGKINRAQYYSRLARDFALSLADVTALFDTVQATIRPEESFLAFLAELKSRFGEQLKLYAVANMSREDYAMLKSLPIDWSLFDGVFLSADLGMRKPELRFFRHVLESISMKPEDTILVDNDTDNILCALSMGLKGILFGSTSVPQALTNLLEYDHISRAEQFLRSHAKSLHSVTHTGVTIRENFAQLLILEATGDIDLVELEYHPTTWNYFIGTQSSQLLLHKHNADRMTTMTSCWLVSAFLVVS.

It belongs to the HAD-like hydrolase superfamily.

It carries out the reaction (2E,6E)-farnesyl diphosphate = (S,S)-drim-8-en-11-yl diphosphate. It participates in secondary metabolite biosynthesis; terpenoid biosynthesis. Sesquiterpene cyclase; part of the gene cluster that mediates the biosynthesis of astellolides, drimane-type sesquiterpene esters that show antimicrobial, anti-inflammatory, and anti-tumor activities. The first step in astellolide biosynthesis is performed by the sesquiterpene cyclase astC that catalyzes the formation of drimanyl pyrophosphate from farnesyl pyrophosphate. Drimanyl pyrophosphate is then dephosphorylated by the sesquiterpene phosphatase astI to produce drimanyl monophosphate which is further dephosphorylated to drim-8-ene-11-ol by atsK. Drim-8-ene-11-ol is converted to confertifolin, probably by the cytochrome P450 monooxygenase astD and/or the dehydrogenase astE. The cytochrome P450 monooxygenases astB, astF and astJ then hydroxylate confertifolin at C6, C14, or C15 to form trihydroxy confertifolin. The nonribosomal peptide synthetase astA catalyzes ester bond formation between trihydroxy contifolin and benzoic acid (BA) or 4-hydroxy benzoic acid (4HBA), leading to the formation of dideacetyl astellolides A and B, respectively. Finally, the O-acetyltransferase astG converts dideacetyl astellolides A and B into deacetyl astellolides A and B. This Aspergillus oryzae (strain ATCC 42149 / RIB 40) (Yellow koji mold) protein is Sesquiterpene cyclase astC.